The sequence spans 258 residues: Adenosylcobinamide-GDP ribazoletransferase (258 aa).

The next 6 helical transmembrane spans lie at 41–61, 65–85, 115–135, 136–156, 197–217, and 236–256; these read FFPL…WLAS, PAPG…TGAF, IGAF…QLLM, AMAA…HAAS, LPLL…LLAA, and CLGL…LAWT.

The protein belongs to the CobS family. Requires Mg(2+) as cofactor.

It localises to the cell inner membrane. The enzyme catalyses alpha-ribazole + adenosylcob(III)inamide-GDP = adenosylcob(III)alamin + GMP + H(+). It carries out the reaction alpha-ribazole 5'-phosphate + adenosylcob(III)inamide-GDP = adenosylcob(III)alamin 5'-phosphate + GMP + H(+). Its pathway is cofactor biosynthesis; adenosylcobalamin biosynthesis; adenosylcobalamin from cob(II)yrinate a,c-diamide: step 7/7. In terms of biological role, joins adenosylcobinamide-GDP and alpha-ribazole to generate adenosylcobalamin (Ado-cobalamin). Also synthesizes adenosylcobalamin 5'-phosphate from adenosylcobinamide-GDP and alpha-ribazole 5'-phosphate. The sequence is that of Adenosylcobinamide-GDP ribazoletransferase from Ralstonia nicotianae (strain ATCC BAA-1114 / GMI1000) (Ralstonia solanacearum).